Reading from the N-terminus, the 344-residue chain is Ribosomal RNA small subunit methyltransferase H 2 (344 aa).

S-adenosyl-L-methionine is bound by residues 78-80 (GGH), aspartate 98, phenylalanine 131, aspartate 145, and glutamine 152.

The protein belongs to the methyltransferase superfamily. RsmH family.

It is found in the cytoplasm. The enzyme catalyses cytidine(1402) in 16S rRNA + S-adenosyl-L-methionine = N(4)-methylcytidine(1402) in 16S rRNA + S-adenosyl-L-homocysteine + H(+). In terms of biological role, specifically methylates the N4 position of cytidine in position 1402 (C1402) of 16S rRNA. This is Ribosomal RNA small subunit methyltransferase H 2 from Acholeplasma laidlawii (strain PG-8A).